A 342-amino-acid chain; its full sequence is MLKDQNLDIERKQDHIEINLTKNVESTLKSGFESIHFIHNALPEINYDSVNTTTTFLGKSLQAPILISSMTGGTTRARDINYRLAQVAQKAGIAMGLGSMRVLLTEPDTIKTFAVRHIAPDIPLLANIGAVQLNYGVTPKECQYLVDAIKADALILHLNVLQELTQPEGNRNWEKLLPKIREVVNYLSIPVIVKEVGYGLSKKVAESLIDAGVKVLDIAGSGGTSWSQVEAYRATNSLQNRIASSFINWGIPTLDSLKMVREVSKDIPIITSGGFKSGIDGAKAIRIGANIFGLAGQFLKAADTSESLLSEEIQLIIEQLKITMLCTGSRTLKDLAKAEIRL.

Residue 11–12 (RK) coordinates substrate. FMN is bound by residues Ser68, 69-71 (SMT), Ser99, and Asn127. Residue 99–101 (SMR) coordinates substrate. Gln162 contributes to the substrate binding site. Glu163 serves as a coordination point for Mg(2+). FMN contacts are provided by residues Lys194, Thr224, 274 to 276 (GFK), and 295 to 296 (AG).

The protein belongs to the IPP isomerase type 2 family. Homooctamer. Dimer of tetramers. The cofactor is FMN. It depends on NADPH as a cofactor. Mg(2+) is required as a cofactor.

The protein localises to the cytoplasm. It catalyses the reaction isopentenyl diphosphate = dimethylallyl diphosphate. In terms of biological role, involved in the biosynthesis of isoprenoids. Catalyzes the 1,3-allylic rearrangement of the homoallylic substrate isopentenyl (IPP) to its allylic isomer, dimethylallyl diphosphate (DMAPP). The sequence is that of Isopentenyl-diphosphate delta-isomerase from Rickettsia conorii (strain ATCC VR-613 / Malish 7).